Here is a 98-residue protein sequence, read N- to C-terminus: Integration host factor subunit alpha (98 aa).

Positions 49 to 70 (FGNFDLRDKNQRPGRNPKTGED) are disordered.

This sequence belongs to the bacterial histone-like protein family. As to quaternary structure, heterodimer of an alpha and a beta chain.

Functionally, this protein is one of the two subunits of integration host factor, a specific DNA-binding protein that functions in genetic recombination as well as in transcriptional and translational control. This is Integration host factor subunit alpha from Serratia proteamaculans (strain 568).